The sequence spans 263 residues: Elongin-A (263 aa).

2 disordered regions span residues 112-147 (KLEQ…YCPK) and 170-263 (SATS…PKRI). 2 stretches are compositionally biased toward polar residues: residues 186 to 206 (RSSS…NTYP) and 214 to 229 (SFTS…VKTQ). Residues 230–245 (PSSSSSPSISRPTSFP) show a composition bias toward low complexity. A compositionally biased stretch (polar residues) spans 253–263 (SRFSSQVPKRI).

The protein belongs to the ELA1 family. Heterodimer with elc1. Component of a CRL3 E3 ubiquitin ligase complex consisting of a cullin, the linker protein elc1, the substrate receptor pof4/ela1, and the RING protein rbx1. Interacts with skp1.

Functionally, as part of the CRL3 E3 ubiquitin ligase complex; polyubiquitylates monoubiquitylated RNA polymerase II subunit rpb1 to trigger its proteolysis; plays a role in global genomic repair. This chain is Elongin-A (pof4), found in Schizosaccharomyces pombe (strain 972 / ATCC 24843) (Fission yeast).